We begin with the raw amino-acid sequence, 411 residues long: Na(+)-translocating NADH-quinone reductase subunit F (411 aa).

A helical membrane pass occupies residues 6 to 26 (AIGGVAMFTLIIMSFVAIILA). Positions 35-129 (GDVTIHINDN…DMKIEIDPEF (95 aa)) constitute a 2Fe-2S ferredoxin-type domain. 4 residues coordinate [2Fe-2S] cluster: Cys-72, Cys-78, Cys-81, and Cys-113. Positions 132 to 273 (VQKWECEVIS…SGPYGEFFAK (142 aa)) constitute an FAD-binding FR-type domain.

The protein belongs to the NqrF family. Composed of six subunits; NqrA, NqrB, NqrC, NqrD, NqrE and NqrF. The cofactor is [2Fe-2S] cluster. FAD serves as cofactor.

Its subcellular location is the cell inner membrane. It carries out the reaction a ubiquinone + n Na(+)(in) + NADH + H(+) = a ubiquinol + n Na(+)(out) + NAD(+). Functionally, NQR complex catalyzes the reduction of ubiquinone-1 to ubiquinol by two successive reactions, coupled with the transport of Na(+) ions from the cytoplasm to the periplasm. The first step is catalyzed by NqrF, which accepts electrons from NADH and reduces ubiquinone-1 to ubisemiquinone by a one-electron transfer pathway. The polypeptide is Na(+)-translocating NADH-quinone reductase subunit F (Psychrobacter arcticus (strain DSM 17307 / VKM B-2377 / 273-4)).